Here is a 207-residue protein sequence, read N- to C-terminus: 2,3-bisphosphoglycerate-dependent phosphoglycerate mutase (207 aa).

Residues 10-17, 23-24, arginine 62, 89-92, lysine 100, 116-117, and 160-161 each bind substrate; these read RHGQSEWN, TG, ERDY, RR, and GN. Histidine 11 functions as the Tele-phosphohistidine intermediate in the catalytic mechanism. The active-site Proton donor/acceptor is the glutamate 89.

This sequence belongs to the phosphoglycerate mutase family. BPG-dependent PGAM subfamily. As to quaternary structure, homodimer.

The enzyme catalyses (2R)-2-phosphoglycerate = (2R)-3-phosphoglycerate. The protein operates within carbohydrate degradation; glycolysis; pyruvate from D-glyceraldehyde 3-phosphate: step 3/5. In terms of biological role, catalyzes the interconversion of 2-phosphoglycerate and 3-phosphoglycerate. The protein is 2,3-bisphosphoglycerate-dependent phosphoglycerate mutase of Bradyrhizobium diazoefficiens (strain JCM 10833 / BCRC 13528 / IAM 13628 / NBRC 14792 / USDA 110).